The following is an 87-amino-acid chain: Large ribosomal subunit protein eL31 (87 aa).

This sequence belongs to the eukaryotic ribosomal protein eL31 family.

The polypeptide is Large ribosomal subunit protein eL31 (Methanoculleus marisnigri (strain ATCC 35101 / DSM 1498 / JR1)).